We begin with the raw amino-acid sequence, 557 residues long: Transcription factor fil1 (557 aa).

The tract at residues 234–258 (SPVKRELNDSTSPSKLSESSSSLTG) is disordered. The segment covering 243–258 (STSPSKLSESSSSLTG) has biased composition (low complexity). 2 consecutive GATA-type zinc fingers follow at residues 365 to 390 (CFNC…CNAC) and 419 to 443 (CANC…CNAC).

The protein resides in the nucleus. Its subcellular location is the cytoplasm. In terms of biological role, activates genes required for amino acid biosynthesis and acts as a master transcriptional regulator during amino acid starvation. Binds variations of the DNA sequence 5'-GAT[AC]GC-3'. The chain is Transcription factor fil1 from Schizosaccharomyces pombe (strain 972 / ATCC 24843) (Fission yeast).